Here is a 242-residue protein sequence, read N- to C-terminus: Placenta-expressed transcript 1 protein (242 aa).

The first 26 residues, 1-26 (MAVLRSLLPQLGLFLCLALCFSPALS), serve as a signal peptide directing secretion. Asn-47, Asn-56, and Asn-66 each carry an N-linked (GlcNAc...) asparagine glycan. Ser-223 is lipidated: GPI-anchor amidated serine. Residues 224–242 (PLAGALHILLVFLISKLLF) constitute a propeptide, removed in mature form.

In terms of processing, N-glycosylated. Post-translationally, GPI-anchored. In terms of tissue distribution, present at high level in the dermal sheath cells near the bulge area of the hair follicle and in the differentiated sebocytes of the normal adult skin (at protein level).

Its subcellular location is the apical cell membrane. Modulates leading keratinocyte migration and cellular adhesion to matrix proteins during a wound-healing response and promotes wound repair. May play a role during trichilemmal differentiation of the hair follicle. The sequence is that of Placenta-expressed transcript 1 protein (PLET1) from Mesocricetus auratus (Golden hamster).